The sequence spans 584 residues: A-type ATP synthase subunit A (584 aa).

Position 233 to 240 (233 to 240) interacts with ATP; sequence GPFGSGKT.

This sequence belongs to the ATPase alpha/beta chains family. As to quaternary structure, has multiple subunits with at least A(3), B(3), C, D, E, F, H, I and proteolipid K(x).

It is found in the cell membrane. It catalyses the reaction ATP + H2O + 4 H(+)(in) = ADP + phosphate + 5 H(+)(out). Component of the A-type ATP synthase that produces ATP from ADP in the presence of a proton gradient across the membrane. The A chain is the catalytic subunit. The polypeptide is A-type ATP synthase subunit A (Methanothermobacter thermautotrophicus (strain ATCC 29096 / DSM 1053 / JCM 10044 / NBRC 100330 / Delta H) (Methanobacterium thermoautotrophicum)).